Reading from the N-terminus, the 293-residue chain is Ribosomal RNA small subunit methyltransferase H (293 aa).

S-adenosyl-L-methionine contacts are provided by residues 34 to 36 (GGH), aspartate 54, leucine 86, aspartate 101, and glutamine 108.

Belongs to the methyltransferase superfamily. RsmH family.

It is found in the cytoplasm. It carries out the reaction cytidine(1402) in 16S rRNA + S-adenosyl-L-methionine = N(4)-methylcytidine(1402) in 16S rRNA + S-adenosyl-L-homocysteine + H(+). Its function is as follows. Specifically methylates the N4 position of cytidine in position 1402 (C1402) of 16S rRNA. This chain is Ribosomal RNA small subunit methyltransferase H, found in Elusimicrobium minutum (strain Pei191).